A 602-amino-acid polypeptide reads, in one-letter code: 3-hydroxy-3-methylglutaryl-coenzyme A reductase 2 (602 aa).

The next 2 helical transmembrane spans lie at 44–67 and 95–115; these read ASDA…FFSV and AIVS…IGFV. A linker region spans residues 116 to 187; it reads QTFVSRGNND…PLITSASSGE (72 aa). Asn-124 is a glycosylation site (N-linked (GlcNAc...) asparagine). Residues 188-602 form a catalytic region; sequence DEEIIKSVVQ…STKDVTKASS (415 aa). Glu-281 functions as the Charge relay system in the catalytic mechanism. A glycan (N-linked (GlcNAc...) asparagine) is linked at Asn-345. Lys-413 functions as the Charge relay system in the catalytic mechanism. Asn-458 carries an N-linked (GlcNAc...) asparagine glycan. Asp-489 acts as the Charge relay system in catalysis. The Proton donor role is filled by His-587. N-linked (GlcNAc...) asparagine glycosylation is present at Asn-591.

The protein belongs to the HMG-CoA reductase family.

The protein resides in the endoplasmic reticulum membrane. The catalysed reaction is (R)-mevalonate + 2 NADP(+) + CoA = (3S)-3-hydroxy-3-methylglutaryl-CoA + 2 NADPH + 2 H(+). It participates in metabolic intermediate biosynthesis; (R)-mevalonate biosynthesis; (R)-mevalonate from acetyl-CoA: step 3/3. Functionally, catalyzes the synthesis of mevalonate. The specific precursor of all isoprenoid compounds present in plants. This is 3-hydroxy-3-methylglutaryl-coenzyme A reductase 2 (HMG2) from Solanum lycopersicum (Tomato).